Reading from the N-terminus, the 255-residue chain is tRNA pseudouridine synthase A (255 aa).

Aspartate 56 functions as the Nucleophile in the catalytic mechanism. Tyrosine 114 provides a ligand contact to substrate.

The protein belongs to the tRNA pseudouridine synthase TruA family. Homodimer.

It catalyses the reaction uridine(38/39/40) in tRNA = pseudouridine(38/39/40) in tRNA. Formation of pseudouridine at positions 38, 39 and 40 in the anticodon stem and loop of transfer RNAs. The chain is tRNA pseudouridine synthase A from Methylacidiphilum infernorum (isolate V4) (Methylokorus infernorum (strain V4)).